We begin with the raw amino-acid sequence, 201 residues long: GTP-binding protein ryh1 (201 aa).

Residue 18-25 (GEQSVGKT) coordinates GTP. An Effector region motif is present at residues 40-48 (YQATIGIDF). Residues 66–70 (DTAGQ) and 124–127 (NKTD) contribute to the GTP site. S-geranylgeranyl cysteine attachment occurs at residues Cys-199 and Cys-201. A Cysteine methyl ester modification is found at Cys-201.

This sequence belongs to the small GTPase superfamily. Rab family.

It localises to the endosome membrane. The protein localises to the golgi apparatus membrane. It is found in the nucleus. The protein resides in the cytoplasm. Its subcellular location is the cytosol. Functionally, has a role in retrograde traffricking of proteins from the endosome to the Golgi. Involved in protein transport to the plasma membrane. Involved in the secretory pathway where it has a role in acid phosphatase secretion. Required also in normal glycosylation trafficking pathways. The sequence is that of GTP-binding protein ryh1 (ryh1) from Schizosaccharomyces pombe (strain 972 / ATCC 24843) (Fission yeast).